We begin with the raw amino-acid sequence, 118 residues long: Large ribosomal subunit protein bL19 (118 aa).

The protein belongs to the bacterial ribosomal protein bL19 family.

In terms of biological role, this protein is located at the 30S-50S ribosomal subunit interface and may play a role in the structure and function of the aminoacyl-tRNA binding site. In Marinobacter nauticus (strain ATCC 700491 / DSM 11845 / VT8) (Marinobacter aquaeolei), this protein is Large ribosomal subunit protein bL19.